The primary structure comprises 87 residues: U3-theraphotoxin-Cg1b (87 aa).

The N-terminal stretch at 1–23 (MRTLTLIAIVTCAALVIFHAAAA) is a signal peptide. Positions 24–48 (EELEAQDVIQPEDIFTGVATLEEDR) are excised as a propeptide. 3 disulfides stabilise this stretch: Cys52-Cys65, Cys56-Cys79, and Cys73-Cys84.

It belongs to the neurotoxin 12 (Hwtx-2) family. 03 (juruin) subfamily. As to expression, expressed by the venom gland.

The protein localises to the secreted. In terms of biological role, probable ion channel inhibitor. This chain is U3-theraphotoxin-Cg1b, found in Chilobrachys guangxiensis (Chinese earth tiger tarantula).